Reading from the N-terminus, the 801-residue chain is Protocadherin beta-8 (801 aa).

The first 29 residues, 1–29 (MEASGKLICRQRQVLFSFLLLGLSLAGAA), serve as a signal peptide directing secretion. Over 30–691 (EPRSYSVVEE…GQADSLTVYL (662 aa)) the chain is Extracellular. Cadherin domains are found at residues 36–134 (VVEE…SPVF), 139–243 (MLVK…APEF), 248–348 (YRVQ…APEV), 353–452 (FTSP…APAF), and 457–562 (YTLF…SPFV). The cysteines at positions 97 and 103 are disulfide-linked. Residues Asn419 and Asn437 are each glycosylated (N-linked (GlcNAc...) asparagine). Asn568 is a glycosylation site (N-linked (GlcNAc...) asparagine). The Cadherin 6 domain maps to 569–672 (GSAPCTELVP…LVDGFSQPYL (104 aa)). The helical transmembrane segment at 692-710 (VVALASVSSLFLFSVLLFV) threads the bilayer. Residues 711 to 801 (AVLLCRRSRA…NGFGFSLQLK (91 aa)) lie on the Cytoplasmic side of the membrane.

As to quaternary structure, forms homodimers in trans (molecules expressed by two different cells). Forms promiscuous heterodimers in cis (at the plasma membrane of the same cell) with other protocadherins.

The protein resides in the cell membrane. Functionally, calcium-dependent cell-adhesion protein involved in cells self-recognition and non-self discrimination. Thereby, it is involved in the establishment and maintenance of specific neuronal connections in the brain. The sequence is that of Protocadherin beta-8 from Homo sapiens (Human).